The chain runs to 610 residues: Ecto-NOX disulfide-thiol exchanger 2 (610 aa).

One can recognise an RRM domain in the interval 128–207; sequence KTVFVGGLPE…GRLHVDFAQA (80 aa). Coiled coils occupy residues 293–328 and 381–505; these read IQSANSHVRRLVNEKAAHEKDMEEAKEKFKQALSGI and RREE…KESC.

It belongs to the ENOX family. Requires Cu cation as cofactor. In terms of processing, glycosylated. Found in the sera of cancer patients with a wide variety of cancers including breast, prostate, lung and ovarian cancers, leukemias, and lymphomas. Not found in the serum of healthy volunteers or patients with disorders other than cancer. Probably shed into serum by cancer cells. Found on the cell borders of renal, kidney and ovarian carcinomas but not on the borders of surrounding non-cancerous stromal cells.

The protein resides in the cell membrane. Its subcellular location is the secreted. It is found in the extracellular space. Inhibited by the antitumor sulfonylurea LY181984, the vabilloid capsaicin, and retinoids. May be involved in cell growth. Probably acts as a terminal oxidase of plasma electron transport from cytosolic NAD(P)H via hydroquinones to acceptors at the cell surface. Hydroquinone oxidase activity alternates with a protein disulfide-thiol interchange/oxidoreductase activity which may control physical membrane displacements associated with vesicle budding or cell enlargement. The activities oscillate with a period length of 22 minutes and play a role in control of the ultradian cellular biological clock. The polypeptide is Ecto-NOX disulfide-thiol exchanger 2 (ENOX2) (Homo sapiens (Human)).